The chain runs to 48 residues: Acidic phospholipase A2 (48 aa).

Positions 27, 29, and 31 each coordinate Ca(2+). Cys-28 and Cys-44 are disulfide-bonded. Residue His-47 is part of the active site. Residue Asp-48 participates in Ca(2+) binding.

Belongs to the phospholipase A2 family. Group II subfamily. D49 sub-subfamily. In terms of assembly, monomer. Ca(2+) serves as cofactor. Expressed by the venom gland.

The protein localises to the secreted. It carries out the reaction a 1,2-diacyl-sn-glycero-3-phosphocholine + H2O = a 1-acyl-sn-glycero-3-phosphocholine + a fatty acid + H(+). With respect to regulation, inhibited by EDTA. Inhibited by Ba(2+), Cu(+), Fe(2+) and Zn(2+) ions and, to a lesser extent, by Mn(2+) and Mg(2+) ions. Snake venom phospholipase A2 (PLA2) that shows myotoxicity and induces paw edema in mice. Exhibits indirect hemolytic activity. Inhibits platelet aggregation induced by ADP and collagen. PLA2 catalyzes the calcium-dependent hydrolysis of the 2-acyl groups in 3-sn-phosphoglycerides. This is Acidic phospholipase A2 from Bothrops pauloensis (Neuwied's lancehead).